Consider the following 210-residue polypeptide: Probable nicotinate-nucleotide adenylyltransferase (210 aa).

It belongs to the NadD family.

The catalysed reaction is nicotinate beta-D-ribonucleotide + ATP + H(+) = deamido-NAD(+) + diphosphate. The protein operates within cofactor biosynthesis; NAD(+) biosynthesis; deamido-NAD(+) from nicotinate D-ribonucleotide: step 1/1. Functionally, catalyzes the reversible adenylation of nicotinate mononucleotide (NaMN) to nicotinic acid adenine dinucleotide (NaAD). This chain is Probable nicotinate-nucleotide adenylyltransferase, found in Streptococcus pyogenes serotype M3 (strain ATCC BAA-595 / MGAS315).